We begin with the raw amino-acid sequence, 384 residues long: MAKHLFTSESVSEGHPDKIADQISDAVLDAILEQDPKARVACETYVKTGMVMVGGEVTTSAWVDIEEITRETVREIGYVHSDMGFDANSCAVLNTIGKQSPDINQGVDKEDPKEQGAGDQGIMFGYATNETPILMPAPITYAHLLVKQQAEVRKSGKLDFLRPDAKSQVTFQYDQGKIVGIDAVVLSTQHSDSVTTADLREAVMEEIIKPVLPAEWLSKETKFFINPTGRFVIGGPMGDCGLTGRKIIVDTYGGAARHGGGAFSGKDPSKVDRSAAYAARYVAKNIVAAGMADRCEIQLSYAIGVADPTSIMIETFGTEKVSHDIIIESVRQHFDLRPYGLQEMLNLLQPIYKKTAAYGHFGREEFPWEATDKAEILRDFAGIK.

H15 serves as a coordination point for ATP. D17 serves as a coordination point for Mg(2+). E43 is a binding site for K(+). Positions 56 and 99 each coordinate L-methionine. A flexible loop region spans residues 99-109; the sequence is QSPDINQGVDK. ATP-binding positions include 164-166, 230-231, D239, 245-246, A262, and K266; these read DAK, RF, and RK. L-methionine is bound at residue D239. K270 contributes to the L-methionine binding site.

It belongs to the AdoMet synthase family. As to quaternary structure, homotetramer; dimer of dimers. It depends on Mg(2+) as a cofactor. Requires K(+) as cofactor.

It localises to the cytoplasm. It carries out the reaction L-methionine + ATP + H2O = S-adenosyl-L-methionine + phosphate + diphosphate. Its pathway is amino-acid biosynthesis; S-adenosyl-L-methionine biosynthesis; S-adenosyl-L-methionine from L-methionine: step 1/1. Functionally, catalyzes the formation of S-adenosylmethionine (AdoMet) from methionine and ATP. The overall synthetic reaction is composed of two sequential steps, AdoMet formation and the subsequent tripolyphosphate hydrolysis which occurs prior to release of AdoMet from the enzyme. This is S-adenosylmethionine synthase from Aliivibrio salmonicida (strain LFI1238) (Vibrio salmonicida (strain LFI1238)).